The chain runs to 747 residues: H(+)/Cl(-) exchange transporter 4 (747 aa).

Residues 1–50 (MDFLDEPFPDVGTYEDFHTIDWLREKSRDTDRHRKITSKSKESIWEFIKS) form a required for localization in the endoplasmic reticulum region. Residues 1–54 (MDFLDEPFPDVGTYEDFHTIDWLREKSRDTDRHRKITSKSKESIWEFIKSLLDA) are Cytoplasmic-facing. 2 consecutive transmembrane segments (helical) span residues 55-92 (WSGW…VCLS) and 138-161 (LNYL…VRVF). A Selectivity filter part_1 motif is present at residues 167-171 (GSGIP). Ser-168 contacts chloride. Positions 170-177 (IPEIKTIL) form an intramembrane region, helical. Helical transmembrane passes span 187 to 205 (GKWT…VSSG) and 211 to 230 (EGPL…SLFS). A Selectivity filter part_2 motif is present at residues 209–213 (GKEGP). 2 consecutive intramembrane regions (helical) follow at residues 242–254 (VLSA…VSVA) and 258–266 (PIGGVLFSL). 5 consecutive transmembrane segments (helical) span residues 278 to 296 (LWRS…RSIN), 320 to 345 (FPFI…AWCR), 352 to 372 (LGKY…IIAY), 429 to 449 (MWQL…TFGM), and 454 to 473 (GLFI…VGIG). The short motif at 454-458 (GLFIP) is the Selectivity filter part_3 element. Phe-456 provides a ligand contact to chloride. Intramembrane regions (helical) lie at residues 501-515 (GLYA…LGGV) and 519-530 (TVSLVVIMFELT). The note=Loop between two helices intramembrane region spans 531 to 534 (GGLE). The chain crosses the membrane as a helical span at residues 535–553 (YIVPLMAAAVTSKWVADAF). Topologically, residues 554-747 (GKEGIYEAHI…NQDPESIIFN (194 aa)) are cytoplasmic. Tyr-559 is a binding site for chloride. Positions 587 to 653 (MRPRRGEPPL…AIKNARQRQE (67 aa)) constitute a CBS 1 domain. Residues Ser-597 and 618–620 (YNG) contribute to the ATP site. The interval 654-683 (GIVSNSIMYFTEEPPELPANSPHPLKLRRI) is required for localization in the endoplasmic reticulum. The region spanning 684–742 (LNLSPFTVTDHTPMETVVDIFRKLGLRQCLVTRSGRLLGIITKKDVLRHMAQMANQDPE) is the CBS 2 domain. 725–728 (TKKD) contacts ATP.

The protein belongs to the chloride channel (TC 2.A.49) family. ClC-4/CLCN4 subfamily. Strongly expressed in liver and brain, but also in heart, muscle, kidney and spleen.

It localises to the early endosome membrane. The protein localises to the late endosome membrane. The protein resides in the endoplasmic reticulum membrane. Its subcellular location is the lysosome membrane. It is found in the recycling endosome membrane. Functionally, strongly outwardly rectifying, electrogenic H(+)/Cl(-)exchanger which mediates the exchange of chloride ions against protons. The CLC channel family contains both chloride channels and proton-coupled anion transporters that exchange chloride or another anion for protons. The presence of conserved gating glutamate residues is typical for family members that function as antiporters. This is H(+)/Cl(-) exchange transporter 4 (Clcn4) from Rattus norvegicus (Rat).